Consider the following 442-residue polypeptide: 23S rRNA (uracil(1939)-C(5))-methyltransferase RlmD (442 aa).

Positions 12–70 constitute a TRAM domain; sequence SKQLSAKVTLEVTKLDHLGAGMAQHQGKIVFIPGALPNEKVTVQLTEQKKRHARAKLLK. Cys83, Cys89, Cys92, and Cys171 together coordinate [4Fe-4S] cluster. Residues Gln276, Phe305, Asn310, Glu326, Asp353, and Asp373 each contribute to the S-adenosyl-L-methionine site. The Nucleophile role is filled by Cys399.

This sequence belongs to the class I-like SAM-binding methyltransferase superfamily. RNA M5U methyltransferase family. RlmD subfamily.

The catalysed reaction is uridine(1939) in 23S rRNA + S-adenosyl-L-methionine = 5-methyluridine(1939) in 23S rRNA + S-adenosyl-L-homocysteine + H(+). Functionally, catalyzes the formation of 5-methyl-uridine at position 1939 (m5U1939) in 23S rRNA. This is 23S rRNA (uracil(1939)-C(5))-methyltransferase RlmD from Shewanella sediminis (strain HAW-EB3).